The following is a 418-amino-acid chain: Aminodeoxyfutalosine deaminase (418 aa).

Zn(2+) is bound by residues His-97 and His-99. The substrate site is built by Glu-173 and His-211. Residue His-238 coordinates Zn(2+). Catalysis depends on Glu-241, which acts as the Proton donor. A Zn(2+)-binding site is contributed by Asp-352.

Belongs to the metallo-dependent hydrolases superfamily. It depends on Zn(2+) as a cofactor.

The catalysed reaction is 6-amino-6-deoxyfutalosine + H2O + H(+) = futalosine + NH4(+). It functions in the pathway quinol/quinone metabolism; menaquinone biosynthesis. In terms of biological role, catalyzes the deamination of aminodeoxyfutalosine (AFL) into futalosine (FL). To a lesser extent, can also deaminate 5'-deoxyadenosine, 5'-methylthioadenosine, 2'-deoxyadenosine, adenosine, 1-(6-amino-9H-purin-9-yl)-1-deoxy-N-ethyl-beta-D-ribofuranuronamide (NECA), and S-adenosylhomocysteine. The sequence is that of Aminodeoxyfutalosine deaminase from Deinococcus radiodurans (strain ATCC 13939 / DSM 20539 / JCM 16871 / CCUG 27074 / LMG 4051 / NBRC 15346 / NCIMB 9279 / VKM B-1422 / R1).